The sequence spans 187 residues: Adenylate kinase (187 aa).

11–16 (GAGKGT) contacts ATP. An NMP region spans residues 31–60 (STGDILREAVKNQTPMGIEAKRYMDAGDLV). Residues T32, R37, 58–60 (DLV), 86–89 (GFPR), and Q93 contribute to the AMP site. The LID stretch occupies residues 127-137 (GRAEIEGRADD). Position 128 (R128) interacts with ATP. Residues R134 and R145 each coordinate AMP. Residue G173 participates in ATP binding.

This sequence belongs to the adenylate kinase family. In terms of assembly, monomer.

It is found in the cytoplasm. It catalyses the reaction AMP + ATP = 2 ADP. Its pathway is purine metabolism; AMP biosynthesis via salvage pathway; AMP from ADP: step 1/1. Functionally, catalyzes the reversible transfer of the terminal phosphate group between ATP and AMP. Plays an important role in cellular energy homeostasis and in adenine nucleotide metabolism. The chain is Adenylate kinase from Leptospira borgpetersenii serovar Hardjo-bovis (strain JB197).